The following is a 1457-amino-acid chain: Bridge-like lipid transfer protein family member 3B (1457 aa).

A Chorein N-terminal domain is found at 3 to 94 (GIIKKQILKH…DKVIMEMSTC (92 aa)). 2 disordered regions span residues 267 to 295 (STEQRKSMAPEPTQSSTVTSSAQHVKTPQ) and 409 to 449 (DRNL…PQPS). Residues 278–295 (PTQSSTVTSSAQHVKTPQ) are compositionally biased toward polar residues. 4 positions are modified to phosphoserine: S414, S418, S774, and S934. Disordered stretches follow at residues 975–1038 (SEDE…TGKG), 1056–1099 (ASLS…LSVS), and 1145–1183 (SNTSCQSPAESVNTSANTQTCGEASPEAVSTNSEGTQEN). The segment covering 980-995 (SGLSHKSGSGEMTSEG) has biased composition (polar residues). The residue at position 1008 (S1008) is a Phosphoserine. Over residues 1145–1180 (SNTSCQSPAESVNTSANTQTCGEASPEAVSTNSEGT) the composition is skewed to polar residues. A coiled-coil region spans residues 1410–1455 (ANFLDITREQLMEENECLRQRLAQAKMELAEAHSARDELLHQMKRM).

As to quaternary structure, homodimer (via N-terminus). Associates with the Golgi-associated retrograde protein (GARP) complex. Interacts with GARP complex component VPS52. Interacts (via C-terminal coiled-coil domain) with STX6.

The protein localises to the cytoplasm. Its subcellular location is the cytosol. It is found in the early endosome. Its function is as follows. Tube-forming lipid transport protein which mediates the transfer of lipids between membranes at organelle contact sites. Required for retrograde traffic of vesicle clusters in the early endocytic pathway to the Golgi complex. The chain is Bridge-like lipid transfer protein family member 3B (Bltp3b) from Mus musculus (Mouse).